We begin with the raw amino-acid sequence, 393 residues long: Na(+)/H(+) antiporter NhaA (393 aa).

The next 11 membrane-spanning stretches (helical) occupy residues 18-38, 65-85, 101-121, 131-151, 160-180, 184-204, 210-230, 260-280, 298-318, 334-354, and 369-389; these read AGGV…NSPW, MLIW…GLEI, MLPA…YAAI, GWGI…VLLG, VFLT…IAFF, NLSP…LGLN, AVGP…KSGI, ALQP…NAGV, IAFG…WLLI, FFGV…IGSL, and IGVL…LLAS.

Belongs to the NhaA Na(+)/H(+) (TC 2.A.33) antiporter family.

Its subcellular location is the cell inner membrane. The catalysed reaction is Na(+)(in) + 2 H(+)(out) = Na(+)(out) + 2 H(+)(in). Its function is as follows. Na(+)/H(+) antiporter that extrudes sodium in exchange for external protons. In Albidiferax ferrireducens (strain ATCC BAA-621 / DSM 15236 / T118) (Rhodoferax ferrireducens), this protein is Na(+)/H(+) antiporter NhaA.